The primary structure comprises 767 residues: 5-methyltetrahydropteroyltriglutamate--homocysteine methyltransferase (767 aa).

5-methyltetrahydropteroyltri-L-glutamate is bound by residues 17-20 (RELK) and lysine 117. L-homocysteine is bound by residues 441 to 443 (IGS) and glutamate 494. L-methionine is bound by residues 441-443 (IGS) and glutamate 494. 5-methyltetrahydropteroyltri-L-glutamate is bound by residues 525–526 (RC) and tryptophan 571. L-homocysteine is bound at residue aspartate 609. Aspartate 609 lines the L-methionine pocket. Glutamate 615 provides a ligand contact to 5-methyltetrahydropteroyltri-L-glutamate. 3 residues coordinate Zn(2+): histidine 652, cysteine 654, and glutamate 676. Residue histidine 705 is the Proton donor of the active site. Cysteine 737 lines the Zn(2+) pocket.

It belongs to the vitamin-B12 independent methionine synthase family. It depends on Zn(2+) as a cofactor.

It carries out the reaction 5-methyltetrahydropteroyltri-L-glutamate + L-homocysteine = tetrahydropteroyltri-L-glutamate + L-methionine. It participates in amino-acid biosynthesis; L-methionine biosynthesis via de novo pathway; L-methionine from L-homocysteine (MetE route): step 1/1. In terms of biological role, catalyzes the transfer of a methyl group from 5-methyltetrahydrofolate to homocysteine resulting in methionine formation. In Bifidobacterium longum (strain NCC 2705), this protein is 5-methyltetrahydropteroyltriglutamate--homocysteine methyltransferase.